The sequence spans 80 residues: Serine rich endogenous peptide 15 (80 aa).

The first 28 residues, 1 to 28 (MSKEKSYVIALLLSLLLCLSFQVGVSEA), serve as a signal peptide directing secretion. 2 short sequence motifs (SCOOP motif) span residues 32-46 (AVTTRYSDSPRCANG) and 66-80 (PRVAVHSNSTKGKGP). Residues 37–80 (YSDSPRCANGSSASPPTRHCPRGRPRPPTPRVAVHSNSTKGKGP) are disordered. 2 consecutive short sequence motifs (sxS motif essential for MIK2 binding) follow at residues 38 to 40 (SDS) and 72 to 74 (SNS). Polar residues predominate over residues 71 to 80 (HSNSTKGKGP).

The protein belongs to the serine rich endogenous peptide (SCOOP) phytocytokine family. As to quaternary structure, interacts with MIK2 (via extracellular leucine-rich repeat domain); this interaction triggers the formation of complex between MIK2 and the BAK1/SERK3 and SERK4 coreceptors, and subsequent BAK1 activation by phosphorylation. As to expression, mostly expressed in leaves, and, to a lower extent, in seedlings shoots, roots, stems, siliques, seeds and flowers.

Its subcellular location is the cell membrane. It is found in the secreted. The protein resides in the extracellular space. The protein localises to the apoplast. It localises to the endoplasmic reticulum. Its subcellular location is the golgi apparatus. Its function is as follows. Brassicaceae-specific phytocytokine (plant endogenous peptide released into the apoplast) perceived by MIK2 in a BAK1/SERK3 and SERK4 coreceptors-dependent manner, that modulates various physiological and antimicrobial processes including growth prevention and reactive oxygen species (ROS) response regulation. Inhibits root growth. The chain is Serine rich endogenous peptide 15 from Arabidopsis thaliana (Mouse-ear cress).